We begin with the raw amino-acid sequence, 333 residues long: Ketol-acid reductoisomerase (NADP(+)) (333 aa).

Residues 2 to 182 (AELFYDDDAD…GGTRAGVIKT (181 aa)) enclose the KARI N-terminal Rossmann domain. NADP(+)-binding positions include 25–28 (YGSQ), serine 51, serine 53, and 83–86 (DPIQ). Histidine 108 is a catalytic residue. Position 134 (glycine 134) interacts with NADP(+). The KARI C-terminal knotted domain occupies 183–328 (TFTEETETDL…RELRKLMSWV (146 aa)). Mg(2+) is bound by residues aspartate 191, glutamate 195, glutamate 227, and glutamate 231. Residue serine 252 participates in substrate binding.

It belongs to the ketol-acid reductoisomerase family. It depends on Mg(2+) as a cofactor.

The enzyme catalyses (2R)-2,3-dihydroxy-3-methylbutanoate + NADP(+) = (2S)-2-acetolactate + NADPH + H(+). It catalyses the reaction (2R,3R)-2,3-dihydroxy-3-methylpentanoate + NADP(+) = (S)-2-ethyl-2-hydroxy-3-oxobutanoate + NADPH + H(+). The protein operates within amino-acid biosynthesis; L-isoleucine biosynthesis; L-isoleucine from 2-oxobutanoate: step 2/4. Its pathway is amino-acid biosynthesis; L-valine biosynthesis; L-valine from pyruvate: step 2/4. Functionally, involved in the biosynthesis of branched-chain amino acids (BCAA). Catalyzes an alkyl-migration followed by a ketol-acid reduction of (S)-2-acetolactate (S2AL) to yield (R)-2,3-dihydroxy-isovalerate. In the isomerase reaction, S2AL is rearranged via a Mg-dependent methyl migration to produce 3-hydroxy-3-methyl-2-ketobutyrate (HMKB). In the reductase reaction, this 2-ketoacid undergoes a metal-dependent reduction by NADPH to yield (R)-2,3-dihydroxy-isovalerate. The sequence is that of Ketol-acid reductoisomerase (NADP(+)) from Streptomyces griseus subsp. griseus (strain JCM 4626 / CBS 651.72 / NBRC 13350 / KCC S-0626 / ISP 5235).